The sequence spans 510 residues: ATP synthase subunit alpha (510 aa).

169 to 176 is an ATP binding site; it reads GDRQTGKT.

It belongs to the ATPase alpha/beta chains family. In terms of assembly, F-type ATPases have 2 components, CF(1) - the catalytic core - and CF(0) - the membrane proton channel. CF(1) has five subunits: alpha(3), beta(3), gamma(1), delta(1), epsilon(1). CF(0) has three main subunits: a(1), b(2) and c(9-12). The alpha and beta chains form an alternating ring which encloses part of the gamma chain. CF(1) is attached to CF(0) by a central stalk formed by the gamma and epsilon chains, while a peripheral stalk is formed by the delta and b chains.

It localises to the cell inner membrane. The catalysed reaction is ATP + H2O + 4 H(+)(in) = ADP + phosphate + 5 H(+)(out). Functionally, produces ATP from ADP in the presence of a proton gradient across the membrane. The alpha chain is a regulatory subunit. The protein is ATP synthase subunit alpha of Nitrobacter hamburgensis (strain DSM 10229 / NCIMB 13809 / X14).